The chain runs to 206 residues: MYSSVYLLLSIVFVGGSNAHDWDSFESHHSEPRLRTSNLDVGEYCATFHENYVYYCRGIWTAEKLLEHRSIMKKIGKFCPSYKSACVTRTRIDPEEERERKEDHKKELTDDVGDMAFDDLMRKLEKIVPCRPNCNVSVHPHCTRQCKCEYEYHRMQKWCKPPRIEERFKYFCRIWYMSCSTYIEELDPEMADAFVSQYANYGNYHG.

The chain is Delta and osm-11 homolog protein 1 (dos-1) from Caenorhabditis elegans.